Consider the following 226-residue polypeptide: Leucyl/phenylalanyl-tRNA--protein transferase (226 aa).

This sequence belongs to the L/F-transferase family.

It is found in the cytoplasm. The enzyme catalyses N-terminal L-lysyl-[protein] + L-leucyl-tRNA(Leu) = N-terminal L-leucyl-L-lysyl-[protein] + tRNA(Leu) + H(+). It carries out the reaction N-terminal L-arginyl-[protein] + L-leucyl-tRNA(Leu) = N-terminal L-leucyl-L-arginyl-[protein] + tRNA(Leu) + H(+). It catalyses the reaction L-phenylalanyl-tRNA(Phe) + an N-terminal L-alpha-aminoacyl-[protein] = an N-terminal L-phenylalanyl-L-alpha-aminoacyl-[protein] + tRNA(Phe). Its function is as follows. Functions in the N-end rule pathway of protein degradation where it conjugates Leu, Phe and, less efficiently, Met from aminoacyl-tRNAs to the N-termini of proteins containing an N-terminal arginine or lysine. This Pseudomonas aeruginosa (strain UCBPP-PA14) protein is Leucyl/phenylalanyl-tRNA--protein transferase.